Reading from the N-terminus, the 92-residue chain is RNA-binding protein Hfq (92 aa).

Residues 9 to 68 enclose the Sm domain; sequence DPFLNALRRERVPVSIYLVNGIKLQGQVESFDQFVILLKNTVSQMVYKHAISTVVPARPF. A disordered region spans residues 68-92; that stretch reads FNVSSHHNTPNQAAGYNASHDDSAE. A compositionally biased stretch (polar residues) spans 69-81; the sequence is NVSSHHNTPNQAA.

The protein belongs to the Hfq family. In terms of assembly, homohexamer.

Functionally, RNA chaperone that binds small regulatory RNA (sRNAs) and mRNAs to facilitate mRNA translational regulation in response to envelope stress, environmental stress and changes in metabolite concentrations. Also binds with high specificity to tRNAs. In Shewanella loihica (strain ATCC BAA-1088 / PV-4), this protein is RNA-binding protein Hfq.